We begin with the raw amino-acid sequence, 219 residues long: 7-cyano-7-deazaguanine synthase 2 (219 aa).

8 to 18 is a binding site for ATP; the sequence is YSGGMDSFTAL. Residues Cys185, Cys193, Cys196, and Cys199 each contribute to the Zn(2+) site.

Belongs to the QueC family. Zn(2+) is required as a cofactor.

It carries out the reaction 7-carboxy-7-deazaguanine + NH4(+) + ATP = 7-cyano-7-deazaguanine + ADP + phosphate + H2O + H(+). The protein operates within purine metabolism; 7-cyano-7-deazaguanine biosynthesis. In terms of biological role, catalyzes the ATP-dependent conversion of 7-carboxy-7-deazaguanine (CDG) to 7-cyano-7-deazaguanine (preQ(0)). In Colwellia psychrerythraea (strain 34H / ATCC BAA-681) (Vibrio psychroerythus), this protein is 7-cyano-7-deazaguanine synthase 2.